The following is a 954-amino-acid chain: Glycine dehydrogenase (decarboxylating) (954 aa).

N6-(pyridoxal phosphate)lysine is present on Lys706.

Belongs to the GcvP family. As to quaternary structure, the glycine cleavage system is composed of four proteins: P, T, L and H. Requires pyridoxal 5'-phosphate as cofactor.

It catalyses the reaction N(6)-[(R)-lipoyl]-L-lysyl-[glycine-cleavage complex H protein] + glycine + H(+) = N(6)-[(R)-S(8)-aminomethyldihydrolipoyl]-L-lysyl-[glycine-cleavage complex H protein] + CO2. Functionally, the glycine cleavage system catalyzes the degradation of glycine. The P protein binds the alpha-amino group of glycine through its pyridoxal phosphate cofactor; CO(2) is released and the remaining methylamine moiety is then transferred to the lipoamide cofactor of the H protein. The sequence is that of Glycine dehydrogenase (decarboxylating) from Pseudomonas savastanoi pv. phaseolicola (strain 1448A / Race 6) (Pseudomonas syringae pv. phaseolicola (strain 1448A / Race 6)).